Reading from the N-terminus, the 672-residue chain is Threonine--tRNA ligase (672 aa).

One can recognise a TGS domain in the interval 2 to 60 (SEPKNILLTVDGELREVTHGTTGLDLFREKPTTAVMRVDGLLWDLAREIPAGASVESVD). The interval 260–567 (DHRKLGAELD…LTEHYAGAFP (308 aa)) is catalytic. Zn(2+)-binding residues include Cys-366, His-417, and His-544.

Belongs to the class-II aminoacyl-tRNA synthetase family. Homodimer. It depends on Zn(2+) as a cofactor.

It localises to the cytoplasm. The catalysed reaction is tRNA(Thr) + L-threonine + ATP = L-threonyl-tRNA(Thr) + AMP + diphosphate + H(+). In terms of biological role, catalyzes the attachment of threonine to tRNA(Thr) in a two-step reaction: L-threonine is first activated by ATP to form Thr-AMP and then transferred to the acceptor end of tRNA(Thr). Also edits incorrectly charged L-seryl-tRNA(Thr). In Micrococcus luteus (strain ATCC 4698 / DSM 20030 / JCM 1464 / CCM 169 / CCUG 5858 / IAM 1056 / NBRC 3333 / NCIMB 9278 / NCTC 2665 / VKM Ac-2230) (Micrococcus lysodeikticus), this protein is Threonine--tRNA ligase.